The sequence spans 172 residues: Protein-export protein SecB (172 aa).

Residues 152-172 (AQGAEGGNSGIVMPDGSQARH) form a disordered region.

Belongs to the SecB family. Homotetramer, a dimer of dimers. One homotetramer interacts with 1 SecA dimer.

Its subcellular location is the cytoplasm. Functionally, one of the proteins required for the normal export of preproteins out of the cell cytoplasm. It is a molecular chaperone that binds to a subset of precursor proteins, maintaining them in a translocation-competent state. It also specifically binds to its receptor SecA. This chain is Protein-export protein SecB, found in Cupriavidus necator (strain ATCC 17699 / DSM 428 / KCTC 22496 / NCIMB 10442 / H16 / Stanier 337) (Ralstonia eutropha).